The chain runs to 272 residues: ATP synthase subunit a (272 aa).

Transmembrane regions (helical) follow at residues 41-61 (VLNI…LVLF), 101-121 (VIAP…FMDL), 147-167 (DVNI…FYSI), 221-241 (LIFI…LSVP), and 243-263 (AIFH…LTIV).

The protein belongs to the ATPase A chain family. In terms of assembly, F-type ATPases have 2 components, CF(1) - the catalytic core - and CF(0) - the membrane proton channel. CF(1) has five subunits: alpha(3), beta(3), gamma(1), delta(1), epsilon(1). CF(0) has three main subunits: a(1), b(2) and c(9-12). The alpha and beta chains form an alternating ring which encloses part of the gamma chain. CF(1) is attached to CF(0) by a central stalk formed by the gamma and epsilon chains, while a peripheral stalk is formed by the delta and b chains.

The protein resides in the cell inner membrane. Functionally, key component of the proton channel; it plays a direct role in the translocation of protons across the membrane. The sequence is that of ATP synthase subunit a from Erwinia tasmaniensis (strain DSM 17950 / CFBP 7177 / CIP 109463 / NCPPB 4357 / Et1/99).